Here is a 364-residue protein sequence, read N- to C-terminus: Aminomethyltransferase (364 aa).

It belongs to the GcvT family. As to quaternary structure, the glycine cleavage system is composed of four proteins: P, T, L and H.

It carries out the reaction N(6)-[(R)-S(8)-aminomethyldihydrolipoyl]-L-lysyl-[protein] + (6S)-5,6,7,8-tetrahydrofolate = N(6)-[(R)-dihydrolipoyl]-L-lysyl-[protein] + (6R)-5,10-methylene-5,6,7,8-tetrahydrofolate + NH4(+). In terms of biological role, the glycine cleavage system catalyzes the degradation of glycine. The sequence is that of Aminomethyltransferase from Shigella flexneri serotype 5b (strain 8401).